The following is a 283-amino-acid chain: Glutamate racemase (283 aa).

Substrate contacts are provided by residues 28 to 29 and 60 to 61; these read DS and YG. Cysteine 92 (proton donor/acceptor) is an active-site residue. Position 93-94 (93-94) interacts with substrate; the sequence is NT. Cysteine 204 (proton donor/acceptor) is an active-site residue. Residue 205–206 coordinates substrate; sequence TH.

It belongs to the aspartate/glutamate racemases family.

The enzyme catalyses L-glutamate = D-glutamate. The protein operates within cell wall biogenesis; peptidoglycan biosynthesis. Functionally, provides the (R)-glutamate required for cell wall biosynthesis. The protein is Glutamate racemase of Salmonella choleraesuis (strain SC-B67).